The primary structure comprises 250 residues: MKILISNDDGVNAEGIAALTTALNQIAETLTVGPDRNCSGASNSLTLTNPLRLNTLDNGFISVSGTPTDCVHLAIRELYQDEPDMVVSGINAGANMGDDTLYSGTVAAAMEGRFLGFPAIAISLVGHELKHYDTAAHYALKIVKALQDSPIAQDKILNINVPDLPLAEVKGIKITRLGARHRAEGMVRTQDPAGREIFWLGPPGDEQDASDGTDFYAVANGYVSITPLTVDLTAFEQLSALESWLTQIHD.

A divalent metal cation is bound by residues Asp-8, Asp-9, Ser-39, and Asn-91.

This sequence belongs to the SurE nucleotidase family. A divalent metal cation is required as a cofactor.

The protein resides in the cytoplasm. The enzyme catalyses a ribonucleoside 5'-phosphate + H2O = a ribonucleoside + phosphate. Its function is as follows. Nucleotidase that shows phosphatase activity on nucleoside 5'-monophosphates. This Shewanella halifaxensis (strain HAW-EB4) protein is 5'-nucleotidase SurE.